Reading from the N-terminus, the 109-residue chain is Spermidine export protein MdtI (109 aa).

Transmembrane regions (helical) follow at residues 6-26, 36-56, 64-84, and 88-108; these read WIHGAWLGLAIVLEIAANVLL, CYGILSLAAVLAAFSALSQAV, AYALWGGFGIAATLAAGWVLF, and LNPKGWVGVILLLAGMVMIKF.

Belongs to the drug/metabolite transporter (DMT) superfamily. Small multidrug resistance (SMR) (TC 2.A.7.1) family. MdtI subfamily. Forms a complex with MdtJ.

It localises to the cell inner membrane. Functionally, catalyzes the excretion of spermidine. In Salmonella paratyphi A (strain ATCC 9150 / SARB42), this protein is Spermidine export protein MdtI.